Reading from the N-terminus, the 557-residue chain is 2-succinyl-5-enolpyruvyl-6-hydroxy-3-cyclohexene-1-carboxylate synthase (557 aa).

The protein belongs to the TPP enzyme family. MenD subfamily. In terms of assembly, homodimer. Requires Mg(2+) as cofactor. Mn(2+) serves as cofactor. The cofactor is thiamine diphosphate.

The enzyme catalyses isochorismate + 2-oxoglutarate + H(+) = 5-enolpyruvoyl-6-hydroxy-2-succinyl-cyclohex-3-ene-1-carboxylate + CO2. It functions in the pathway quinol/quinone metabolism; 1,4-dihydroxy-2-naphthoate biosynthesis; 1,4-dihydroxy-2-naphthoate from chorismate: step 2/7. The protein operates within quinol/quinone metabolism; menaquinone biosynthesis. Functionally, catalyzes the thiamine diphosphate-dependent decarboxylation of 2-oxoglutarate and the subsequent addition of the resulting succinic semialdehyde-thiamine pyrophosphate anion to isochorismate to yield 2-succinyl-5-enolpyruvyl-6-hydroxy-3-cyclohexene-1-carboxylate (SEPHCHC). The chain is 2-succinyl-5-enolpyruvyl-6-hydroxy-3-cyclohexene-1-carboxylate synthase from Phocaeicola vulgatus (strain ATCC 8482 / DSM 1447 / JCM 5826 / CCUG 4940 / NBRC 14291 / NCTC 11154) (Bacteroides vulgatus).